We begin with the raw amino-acid sequence, 376 residues long: dTDP-4-amino-4,6-dideoxygalactose transaminase (376 aa).

K181 is modified (N6-(pyridoxal phosphate)lysine).

This sequence belongs to the DegT/DnrJ/EryC1 family. In terms of assembly, homotetramer. Pyridoxal 5'-phosphate is required as a cofactor.

It catalyses the reaction dTDP-4-amino-4,6-dideoxy-alpha-D-galactose + 2-oxoglutarate = dTDP-4-dehydro-6-deoxy-alpha-D-glucose + L-glutamate. It functions in the pathway bacterial outer membrane biogenesis; enterobacterial common antigen biosynthesis. Its function is as follows. Catalyzes the synthesis of dTDP-4-amino-4,6-dideoxy-D-galactose (dTDP-Fuc4N) from dTDP-4-keto-6-deoxy-D-glucose (dTDP-D-Glc4O) and L-glutamate. The polypeptide is dTDP-4-amino-4,6-dideoxygalactose transaminase (Escherichia coli (strain K12)).